The primary structure comprises 393 residues: Acetylornithine aminotransferase 1 (393 aa).

Arg131 is a binding site for N(2)-acetyl-L-ornithine. 215–218 (DEVQ) serves as a coordination point for pyridoxal 5'-phosphate. At Lys244 the chain carries N6-(pyridoxal phosphate)lysine. Thr272 lines the N(2)-acetyl-L-ornithine pocket. Thr273 serves as a coordination point for pyridoxal 5'-phosphate.

It belongs to the class-III pyridoxal-phosphate-dependent aminotransferase family. ArgD subfamily. In terms of assembly, homodimer. The cofactor is pyridoxal 5'-phosphate.

Its subcellular location is the cytoplasm. It catalyses the reaction N(2)-acetyl-L-ornithine + 2-oxoglutarate = N-acetyl-L-glutamate 5-semialdehyde + L-glutamate. It participates in amino-acid biosynthesis; L-arginine biosynthesis; N(2)-acetyl-L-ornithine from L-glutamate: step 4/4. The sequence is that of Acetylornithine aminotransferase 1 from Bordetella parapertussis (strain 12822 / ATCC BAA-587 / NCTC 13253).